Here is an 86-residue protein sequence, read N- to C-terminus: UPF0457 protein SSP0714 (86 aa).

Belongs to the UPF0457 family.

This is UPF0457 protein SSP0714 from Staphylococcus saprophyticus subsp. saprophyticus (strain ATCC 15305 / DSM 20229 / NCIMB 8711 / NCTC 7292 / S-41).